We begin with the raw amino-acid sequence, 219 residues long: Ran-binding protein 1 homolog c (219 aa).

Basic and acidic residues predominate over residues 1 to 11; sequence MASTEPERENR. 2 disordered regions span residues 1–30 and 160–219; these read MASTEPERENREDETEVNEDEDTGAQVAPI and QVGK…EAST. Positions 12–23 are enriched in acidic residues; it reads EDETEVNEDEDT. The region spanning 26 to 161 is the RanBD1 domain; the sequence is QVAPIVRLEE…FTEIAESQQV (136 aa). Residues 185–219 are compositionally biased toward basic and acidic residues; the sequence is SEEKAKEAEEKEPAKEDKETKKEKVEEEKKTEAST.

Its subcellular location is the nucleus. It localises to the nuclear pore complex. The polypeptide is Ran-binding protein 1 homolog c (RANBP1C) (Arabidopsis thaliana (Mouse-ear cress)).